The chain runs to 742 residues: Hapless 2 (742 aa).

The N-terminal stretch at 1-19 (MKFLAFGLIYFHFCILNRC) is a signal peptide. The Extracellular portion of the chain corresponds to 20 to 540 (EYITSSTIQK…CYFSAGCIKE (521 aa)). Disulfide bonds link Cys30-Cys40, Cys118-Cys147, Cys129-Cys182, Cys148-Cys312, Cys150-Cys168, Cys295-Cys319, and Cys431-Cys470. The important for membrane fusion stretch occupies residues 152–179 (LSDILGMGNDLSRGKVCYALNLGAGSAT). The chain crosses the membrane as a helical span at residues 541 to 561 (AFKSIASIAGVASALALVIFL). At 562–742 (AKNGYLVPII…STSPLYLLIE (181 aa)) the chain is on the cytoplasmic side.

The protein belongs to the HAP2/GCS1 family.

The protein localises to the cell membrane. The protein resides in the cell junction. In terms of biological role, during fertilization, required for the formation of intercellular membrane pores and subsequent exchange of gametic pronuclei between cells. Probably initiates the formation of intercellular membrane pores by inserting part of its extracellular domain into the cell membrane of the adjoining cell in the mating pair. Mating requires the presence of HAP2 on at least one of the two cells. Mating efficiency is high when HAP2 is present on both cells, and is strongly reduced when HAP2 is present on only one of the two cells. The polypeptide is Hapless 2 (Tetrahymena thermophila).